Here is a 442-residue protein sequence, read N- to C-terminus: GDP-L-galactose phosphorylase 1 (442 aa).

His238 serves as the catalytic Tele-GMP-histidine intermediate.

The protein belongs to the GDPGP1 family. Interacts with TLP1. In terms of tissue distribution, expressed in leaves, stems, roots, flowers and siliques. Highest expression in green tissues.

It localises to the cytoplasm. The protein resides in the nucleus. The catalysed reaction is GDP-beta-L-galactose + phosphate = beta-L-galactose 1-phosphate + GDP + H(+). The protein operates within cofactor biosynthesis; L-ascorbate biosynthesis via GDP-alpha-D-mannose pathway; L-ascorbate from GDP-alpha-D-mannose: step 2/5. Not inhibited by dithiothreitol, N-ethylmaleimide, phenylmethane sulfonyl fluoride, ascorbate, L-galactose and L-galactonolactone. Its function is as follows. Catalyzes a reaction of the Smirnoff-Wheeler pathway, the major route to ascorbate biosynthesis in plants. Acts as a phosphorylase rather than as a transferase. Uses preferentially GDP-L-galactose and GDP-D-glucose as substrates. Lower activity with GDP-L-fucose, very low activity with GDP-D-mannose, and no activity with UDP-D-glucose, UDP-D-galactose or ADP-D-glucose. Highly specific for inorganic phosphate as the guanylyl acceptor. The sequence is that of GDP-L-galactose phosphorylase 1 (VTC2) from Arabidopsis thaliana (Mouse-ear cress).